Reading from the N-terminus, the 114-residue chain is Putative pterin-4-alpha-carbinolamine dehydratase (114 aa).

It belongs to the pterin-4-alpha-carbinolamine dehydratase family.

It carries out the reaction (4aS,6R)-4a-hydroxy-L-erythro-5,6,7,8-tetrahydrobiopterin = (6R)-L-erythro-6,7-dihydrobiopterin + H2O. The protein is Putative pterin-4-alpha-carbinolamine dehydratase of Chlorobium luteolum (strain DSM 273 / BCRC 81028 / 2530) (Pelodictyon luteolum).